The following is a 219-amino-acid chain: Phosphatidylserine decarboxylase proenzyme (219 aa).

The Schiff-base intermediate with substrate; via pyruvic acid role is filled by serine 188. Serine 188 carries the post-translational modification Pyruvic acid (Ser); by autocatalysis.

The protein belongs to the phosphatidylserine decarboxylase family. PSD-A subfamily. Heterodimer of a large membrane-associated beta subunit and a small pyruvoyl-containing alpha subunit. Requires pyruvate as cofactor. Is synthesized initially as an inactive proenzyme. Formation of the active enzyme involves a self-maturation process in which the active site pyruvoyl group is generated from an internal serine residue via an autocatalytic post-translational modification. Two non-identical subunits are generated from the proenzyme in this reaction, and the pyruvate is formed at the N-terminus of the alpha chain, which is derived from the carboxyl end of the proenzyme. The post-translation cleavage follows an unusual pathway, termed non-hydrolytic serinolysis, in which the side chain hydroxyl group of the serine supplies its oxygen atom to form the C-terminus of the beta chain, while the remainder of the serine residue undergoes an oxidative deamination to produce ammonia and the pyruvoyl prosthetic group on the alpha chain.

The protein localises to the cell membrane. The enzyme catalyses a 1,2-diacyl-sn-glycero-3-phospho-L-serine + H(+) = a 1,2-diacyl-sn-glycero-3-phosphoethanolamine + CO2. It participates in phospholipid metabolism; phosphatidylethanolamine biosynthesis; phosphatidylethanolamine from CDP-diacylglycerol: step 2/2. In terms of biological role, catalyzes the formation of phosphatidylethanolamine (PtdEtn) from phosphatidylserine (PtdSer). The sequence is that of Phosphatidylserine decarboxylase proenzyme from Trichlorobacter lovleyi (strain ATCC BAA-1151 / DSM 17278 / SZ) (Geobacter lovleyi).